We begin with the raw amino-acid sequence, 171 residues long: S-ribosylhomocysteine lyase (171 aa).

Residues H54, H58, and C128 each contribute to the Fe cation site.

This sequence belongs to the LuxS family. Homodimer. The cofactor is Fe cation.

It carries out the reaction S-(5-deoxy-D-ribos-5-yl)-L-homocysteine = (S)-4,5-dihydroxypentane-2,3-dione + L-homocysteine. In terms of biological role, involved in the synthesis of autoinducer 2 (AI-2) which is secreted by bacteria and is used to communicate both the cell density and the metabolic potential of the environment. The regulation of gene expression in response to changes in cell density is called quorum sensing. Catalyzes the transformation of S-ribosylhomocysteine (RHC) to homocysteine (HC) and 4,5-dihydroxy-2,3-pentadione (DPD). This chain is S-ribosylhomocysteine lyase, found in Citrobacter koseri (strain ATCC BAA-895 / CDC 4225-83 / SGSC4696).